The following is a 403-amino-acid chain: Alkaline protease 1 (403 aa).

An N-terminal signal peptide occupies residues 1–21 (MQSIKRTLLLLGAVLPAVLAG). A propeptide spanning residues 22–121 (PIFPHRRAPT…VEEDQVWHLF (100 aa)) is cleaved from the precursor. One can recognise an Inhibitor I9 domain in the interval 36–120 (KYIVTFKSDV…AVEEDQVWHL (85 aa)). The Peptidase S8 domain occupies 130–403 (PWGLGSISHK…PNLLAYNGNA (274 aa)). Active-site charge relay system residues include Asp-162 and His-193. N-linked (GlcNAc...) asparagine glycans are attached at residues Asn-253 and Asn-309. The active-site Charge relay system is Ser-349.

The protein belongs to the peptidase S8 family.

It is found in the secreted. It carries out the reaction Hydrolysis of proteins with broad specificity, and of Bz-Arg-OEt &gt; Ac-Tyr-OEt. Does not hydrolyze peptide amides.. In terms of biological role, secreted alkaline protease that allows assimilation of proteinaceous substrates. The polypeptide is Alkaline protease 1 (alp1) (Aspergillus flavus).